Reading from the N-terminus, the 515-residue chain is Gamma aminobutyrate transaminase 1, mitochondrial (515 aa).

The transit peptide at Met-1–Ser-57 directs the protein to the mitochondrion. Residue Gly-172–Ser-173 participates in pyridoxal 5'-phosphate binding. Residue Tyr-205 coordinates substrate. Asp-312 serves as a coordination point for pyridoxal 5'-phosphate. Lys-341 serves as a coordination point for substrate. Lys-341 bears the N6-(pyridoxal phosphate)lysine mark.

Belongs to the class-III pyridoxal-phosphate-dependent aminotransferase family. As to expression, expressed in leaves, roots, stems, flowers and fruits.

Its subcellular location is the mitochondrion. The enzyme catalyses 4-aminobutanoate + pyruvate = succinate semialdehyde + L-alanine. The catalysed reaction is 4-aminobutanoate + glyoxylate = succinate semialdehyde + glycine. Transaminase that degrades gamma-amino butyric acid (GABA) and uses pyruvate or glyoxylate as amino-group acceptor. Cannot use beta-alanine, ornithine, acetylornithine, serine, glycine, asparagine, glutamine, glutamate, valine, leucine, isoleucine, methionine, phenylalanine, histidine, lysine, arginine, aspartate, threonine, tyrosine, tryptophan, proline, or cysteine as amino donors. Acts predominantly in vegetative tissues. In Solanum lycopersicum (Tomato), this protein is Gamma aminobutyrate transaminase 1, mitochondrial (GABA-TP1).